The sequence spans 198 residues: Large ribosomal subunit protein bL25 (198 aa).

The protein belongs to the bacterial ribosomal protein bL25 family. CTC subfamily. In terms of assembly, part of the 50S ribosomal subunit; part of the 5S rRNA/L5/L18/L25 subcomplex. Contacts the 5S rRNA. Binds to the 5S rRNA independently of L5 and L18.

This is one of the proteins that binds to the 5S RNA in the ribosome where it forms part of the central protuberance. This Streptomyces coelicolor (strain ATCC BAA-471 / A3(2) / M145) protein is Large ribosomal subunit protein bL25.